The sequence spans 363 residues: tRNA dimethylallyltransferase (363 aa).

65 to 72 (GPTASGKS) contacts ATP. Position 67 to 72 (67 to 72 (TASGKS)) interacts with substrate. Interaction with substrate tRNA stretches follow at residues 90–93 (DSMQ) and 214–218 (QRLIR).

Belongs to the IPP transferase family. Monomer. Mg(2+) is required as a cofactor.

The enzyme catalyses adenosine(37) in tRNA + dimethylallyl diphosphate = N(6)-dimethylallyladenosine(37) in tRNA + diphosphate. Functionally, catalyzes the transfer of a dimethylallyl group onto the adenine at position 37 in tRNAs that read codons beginning with uridine, leading to the formation of N6-(dimethylallyl)adenosine (i(6)A). In Rickettsia massiliae (strain Mtu5), this protein is tRNA dimethylallyltransferase.